Reading from the N-terminus, the 160-residue chain is Protein-export protein SecB (160 aa).

This sequence belongs to the SecB family. As to quaternary structure, homotetramer, a dimer of dimers. One homotetramer interacts with 1 SecA dimer.

Its subcellular location is the cytoplasm. One of the proteins required for the normal export of preproteins out of the cell cytoplasm. It is a molecular chaperone that binds to a subset of precursor proteins, maintaining them in a translocation-competent state. It also specifically binds to its receptor SecA. The protein is Protein-export protein SecB of Agrobacterium fabrum (strain C58 / ATCC 33970) (Agrobacterium tumefaciens (strain C58)).